The primary structure comprises 152 residues: S-protein homolog 4 (152 aa).

A signal peptide spans 1–23; it reads MTTMLKTQVHVVVIYLLIQIAFS. The N-linked (GlcNAc...) asparagine glycan is linked to N71.

Belongs to the plant self-incompatibility (S1) protein family.

The protein resides in the secreted. In Arabidopsis thaliana (Mouse-ear cress), this protein is S-protein homolog 4.